Reading from the N-terminus, the 178-residue chain is Nicotinamide-nucleotide adenylyltransferase (178 aa).

Belongs to the archaeal NMN adenylyltransferase family.

It localises to the cytoplasm. It catalyses the reaction beta-nicotinamide D-ribonucleotide + ATP + H(+) = diphosphate + NAD(+). The protein operates within cofactor biosynthesis; NAD(+) biosynthesis; NAD(+) from nicotinamide D-ribonucleotide: step 1/1. The chain is Nicotinamide-nucleotide adenylyltransferase from Pyrobaculum arsenaticum (strain DSM 13514 / JCM 11321 / PZ6).